A 309-amino-acid polypeptide reads, in one-letter code: Thiamine-monophosphate kinase (309 aa).

Positions 25, 39, 40, and 41 each coordinate Mg(2+). Position 48 (Asp48) interacts with substrate. Residues Asp69 and Asp117 each coordinate Mg(2+). ATP contacts are provided by residues 116 to 117 (GD) and Arg140. A Mg(2+)-binding site is contributed by Asp201. Ser203 contributes to the ATP binding site. Asp204 lines the Mg(2+) pocket. Substrate contacts are provided by Glu250 and Trp298.

The protein belongs to the thiamine-monophosphate kinase family.

The catalysed reaction is thiamine phosphate + ATP = thiamine diphosphate + ADP. The protein operates within cofactor biosynthesis; thiamine diphosphate biosynthesis; thiamine diphosphate from thiamine phosphate: step 1/1. In terms of biological role, catalyzes the ATP-dependent phosphorylation of thiamine-monophosphate (TMP) to form thiamine-pyrophosphate (TPP), the active form of vitamin B1. This chain is Thiamine-monophosphate kinase, found in Pyrococcus horikoshii (strain ATCC 700860 / DSM 12428 / JCM 9974 / NBRC 100139 / OT-3).